Reading from the N-terminus, the 503-residue chain is UDP-N-acetylmuramate--L-alanine ligase (503 aa).

An ATP-binding site is contributed by 120–126 (GTHGKTS).

The protein belongs to the MurCDEF family.

The protein resides in the cytoplasm. It carries out the reaction UDP-N-acetyl-alpha-D-muramate + L-alanine + ATP = UDP-N-acetyl-alpha-D-muramoyl-L-alanine + ADP + phosphate + H(+). It functions in the pathway cell wall biogenesis; peptidoglycan biosynthesis. Its function is as follows. Cell wall formation. The sequence is that of UDP-N-acetylmuramate--L-alanine ligase from Rhodococcus opacus (strain B4).